Here is a 207-residue protein sequence, read N- to C-terminus: Outer-membrane lipoprotein LolB (207 aa).

Residues 1–21 form the signal peptide; that stretch reads MPLPDFRLIRLLPLASLVLTA. Cys-22 carries the N-palmitoyl cysteine lipid modification. A lipid anchor (S-diacylglycerol cysteine) is attached at Cys-22.

This sequence belongs to the LolB family. In terms of assembly, monomer.

It localises to the cell outer membrane. Plays a critical role in the incorporation of lipoproteins in the outer membrane after they are released by the LolA protein. The protein is Outer-membrane lipoprotein LolB of Escherichia fergusonii (strain ATCC 35469 / DSM 13698 / CCUG 18766 / IAM 14443 / JCM 21226 / LMG 7866 / NBRC 102419 / NCTC 12128 / CDC 0568-73).